We begin with the raw amino-acid sequence, 520 residues long: Phospholipase C A (520 aa).

Positions 1 to 38 form a signal peptide, tat-type signal; sequence MSASPLLGMSRREFLTKLTGAGAAAFLMDWAAPVIEKA.

Belongs to the bacterial phospholipase C family. Post-translationally, predicted to be exported by the Tat system. The position of the signal peptide cleavage has not been experimentally proven.

The protein localises to the secreted. Its subcellular location is the cell wall. It catalyses the reaction a 1,2-diacyl-sn-glycero-3-phosphocholine + H2O = phosphocholine + a 1,2-diacyl-sn-glycerol + H(+). In terms of biological role, involved in virulence. Induces cytotoxic effects on mouse macrophage cell lines, via direct or indirect enzymatic hydrolysis of cell membrane phospholipids. Hydrolyzes phosphatidylcholine. This Mycobacterium tuberculosis (strain CDC 1551 / Oshkosh) protein is Phospholipase C A.